A 279-amino-acid chain; its full sequence is Large ribosomal subunit protein uL2 (279 aa).

2 stretches are compositionally biased toward basic residues: residues 211 to 221 (GRSRWRGKTPH) and 256 to 279 (SYGK…RKGK). The interval 211–279 (GRSRWRGKTP…KFIVRGRKGK (69 aa)) is disordered.

It belongs to the universal ribosomal protein uL2 family. In terms of assembly, part of the 50S ribosomal subunit. Forms a bridge to the 30S subunit in the 70S ribosome.

In terms of biological role, one of the primary rRNA binding proteins. Required for association of the 30S and 50S subunits to form the 70S ribosome, for tRNA binding and peptide bond formation. It has been suggested to have peptidyltransferase activity; this is somewhat controversial. Makes several contacts with the 16S rRNA in the 70S ribosome. The polypeptide is Large ribosomal subunit protein uL2 (Oenococcus oeni (strain ATCC BAA-331 / PSU-1)).